Consider the following 348-residue polypeptide: Anthranilate phosphoribosyltransferase (348 aa).

5-phospho-alpha-D-ribose 1-diphosphate is bound by residues G89, 92–93, T97, 99–102, 117–125, and S129; these read GD, NIST, and KHGNRSVSS. G89 lines the anthranilate pocket. Mg(2+) is bound at residue S101. An anthranilate-binding site is contributed by N120. R175 provides a ligand contact to anthranilate. D233 and E234 together coordinate Mg(2+).

It belongs to the anthranilate phosphoribosyltransferase family. Homodimer. Mg(2+) is required as a cofactor.

The enzyme catalyses N-(5-phospho-beta-D-ribosyl)anthranilate + diphosphate = 5-phospho-alpha-D-ribose 1-diphosphate + anthranilate. It functions in the pathway amino-acid biosynthesis; L-tryptophan biosynthesis; L-tryptophan from chorismate: step 2/5. Functionally, catalyzes the transfer of the phosphoribosyl group of 5-phosphorylribose-1-pyrophosphate (PRPP) to anthranilate to yield N-(5'-phosphoribosyl)-anthranilate (PRA). This chain is Anthranilate phosphoribosyltransferase, found in Shewanella sp. (strain W3-18-1).